The chain runs to 426 residues: Glutamate-1-semialdehyde 2,1-aminomutase (426 aa).

Position 265 is an N6-(pyridoxal phosphate)lysine (K265).

Belongs to the class-III pyridoxal-phosphate-dependent aminotransferase family. HemL subfamily. As to quaternary structure, homodimer. It depends on pyridoxal 5'-phosphate as a cofactor.

The protein localises to the cytoplasm. It catalyses the reaction (S)-4-amino-5-oxopentanoate = 5-aminolevulinate. It functions in the pathway porphyrin-containing compound metabolism; protoporphyrin-IX biosynthesis; 5-aminolevulinate from L-glutamyl-tRNA(Glu): step 2/2. This is Glutamate-1-semialdehyde 2,1-aminomutase from Salmonella heidelberg (strain SL476).